Consider the following 277-residue polypeptide: Large ribosomal subunit protein uL2 (277 aa).

A disordered region spans residues 225–277; it reads AMNPVDHPHGGGEGKTSGGRHPVSPWGRPEGKTRRANKPSDRFIIRRKSRKRR. The segment covering 253-268 has biased composition (basic and acidic residues); it reads PEGKTRRANKPSDRFI.

It belongs to the universal ribosomal protein uL2 family. As to quaternary structure, part of the 50S ribosomal subunit. Forms a bridge to the 30S subunit in the 70S ribosome.

One of the primary rRNA binding proteins. Required for association of the 30S and 50S subunits to form the 70S ribosome, for tRNA binding and peptide bond formation. It has been suggested to have peptidyltransferase activity; this is somewhat controversial. Makes several contacts with the 16S rRNA in the 70S ribosome. The polypeptide is Large ribosomal subunit protein uL2 (Tropheryma whipplei (strain TW08/27) (Whipple's bacillus)).